A 109-amino-acid polypeptide reads, in one-letter code: COX assembly mitochondrial protein 2 (109 aa).

A CHCH domain is found at 10-54 (FHSCLDFINALDKCHQKEYYKRIFGLCNNEKDALNKCLKEASLNN). 2 consecutive short sequence motifs (cx9C motif) follow at residues 13-23 (CLDFINALDKC) and 36-46 (CNNEKDALNKC). 2 disulfides stabilise this stretch: Cys13-Cys46 and Cys23-Cys36.

The protein belongs to the CMC family. Interacts with CMC1.

It localises to the mitochondrion inner membrane. The protein localises to the mitochondrion intermembrane space. Its function is as follows. Required for mitochondrial cytochrome c oxidase (COX) assembly and respiration. May be involved in copper trafficking and distribution to mitochondrial COX and SOD1. This chain is COX assembly mitochondrial protein 2 (CMC2), found in Saccharomyces cerevisiae (strain ATCC 204508 / S288c) (Baker's yeast).